We begin with the raw amino-acid sequence, 174 residues long: Adenylate kinase (174 aa).

An NMP region spans residues 12-41; the sequence is STGDMLRAAIKAGTPLGLEAKKIIDEGGLV. AMP is bound by residues Thr13, Arg18, 39–41, 67–70, and Gln74; these read GLV and GFPR. Residues 104–141 are LID; the sequence is GRRVHLASGRTYHVTYNPPKVEGKDDVTGEDLIQRDDD. ATP is bound by residues Arg105 and 114–115; that span reads TY. Residues Arg138 and Arg149 each coordinate AMP.

Belongs to the adenylate kinase family. In terms of assembly, monomer.

Its subcellular location is the cytoplasm. It carries out the reaction AMP + ATP = 2 ADP. It participates in purine metabolism; AMP biosynthesis via salvage pathway; AMP from ADP: step 1/1. Functionally, catalyzes the reversible transfer of the terminal phosphate group between ATP and AMP. Plays an important role in cellular energy homeostasis and in adenine nucleotide metabolism. The sequence is that of Adenylate kinase from Neisseria flavescens.